Consider the following 361-residue polypeptide: Eukaryotic translation initiation factor 3 subunit F (361 aa).

2 stretches are compositionally biased toward low complexity: residues methionine 1 to proline 11 and alanine 21 to valine 42. The tract at residues methionine 1–valine 42 is disordered. Alanine 2 is modified (N-acetylalanine). Phosphoserine; by CDK11; in vitro is present on serine 50. The segment covering alanine 55–alanine 78 has biased composition (low complexity). The disordered stretch occupies residues alanine 55–leucine 86. The region spanning valine 96–glycine 226 is the MPN domain. Position 242 is an N6-acetyllysine (lysine 242). Position 262 is a phosphoserine (serine 262).

This sequence belongs to the eIF-3 subunit F family. Component of the eukaryotic translation initiation factor 3 (eIF-3) complex, which is composed of 13 subunits: EIF3A, EIF3B, EIF3C, EIF3D, EIF3E, EIF3F, EIF3G, EIF3H, EIF3I, EIF3J, EIF3K, EIF3L and EIF3M. The eIF-3 complex appears to include 3 stable modules: module A is composed of EIF3A, EIF3B, EIF3G and EIF3I; module B is composed of EIF3F, EIF3H, and EIF3M; and module C is composed of EIF3C, EIF3D, EIF3E, EIF3K and EIF3L. EIF3C of module C binds EIF3B of module A and EIF3H of module B, thereby linking the three modules. EIF3J is a labile subunit that binds to the eIF-3 complex via EIF3B. The eIF-3 complex interacts with RPS6KB1 under conditions of nutrient depletion. Mitogenic stimulation leads to binding and activation of a complex composed of MTOR and RPTOR, leading to phosphorylation and release of RPS6KB1 and binding of EIF4B to eIF-3. Interacts with RNF139; the interaction leads to protein translation inhibitions in a ubiquitination-dependent manner. Interacts with DTX1, the interaction is required for deubiquitinating activity towards NOTCH1. In terms of processing, phosphorylation is enhanced upon serum stimulation. Phosphorylated during apoptosis by caspase-processed CDK11.

The protein localises to the cytoplasm. It catalyses the reaction Thiol-dependent hydrolysis of ester, thioester, amide, peptide and isopeptide bonds formed by the C-terminal Gly of ubiquitin (a 76-residue protein attached to proteins as an intracellular targeting signal).. Its function is as follows. Component of the eukaryotic translation initiation factor 3 (eIF-3) complex, which is required for several steps in the initiation of protein synthesis. The eIF-3 complex associates with the 40S ribosome and facilitates the recruitment of eIF-1, eIF-1A, eIF-2:GTP:methionyl-tRNAi and eIF-5 to form the 43S pre-initiation complex (43S PIC). The eIF-3 complex stimulates mRNA recruitment to the 43S PIC and scanning of the mRNA for AUG recognition. The eIF-3 complex is also required for disassembly and recycling of post-termination ribosomal complexes and subsequently prevents premature joining of the 40S and 60S ribosomal subunits prior to initiation. The eIF-3 complex specifically targets and initiates translation of a subset of mRNAs involved in cell proliferation, including cell cycling, differentiation and apoptosis, and uses different modes of RNA stem-loop binding to exert either translational activation or repression. In terms of biological role, deubiquitinates activated NOTCH1, promoting its nuclear import, thereby acting as a positive regulator of Notch signaling. This Macaca fascicularis (Crab-eating macaque) protein is Eukaryotic translation initiation factor 3 subunit F.